We begin with the raw amino-acid sequence, 387 residues long: Chorismate synthase (387 aa).

NADP(+) contacts are provided by Arg-42 and Arg-48. Residues 131–133 (RSS), 251–252 (QA), Gly-295, 310–314 (KPIPT), and Arg-336 each bind FMN.

Belongs to the chorismate synthase family. Homotetramer. FMNH2 serves as cofactor.

It carries out the reaction 5-O-(1-carboxyvinyl)-3-phosphoshikimate = chorismate + phosphate. The protein operates within metabolic intermediate biosynthesis; chorismate biosynthesis; chorismate from D-erythrose 4-phosphate and phosphoenolpyruvate: step 7/7. Its function is as follows. Catalyzes the anti-1,4-elimination of the C-3 phosphate and the C-6 proR hydrogen from 5-enolpyruvylshikimate-3-phosphate (EPSP) to yield chorismate, which is the branch point compound that serves as the starting substrate for the three terminal pathways of aromatic amino acid biosynthesis. This reaction introduces a second double bond into the aromatic ring system. This Syntrophotalea carbinolica (strain DSM 2380 / NBRC 103641 / GraBd1) (Pelobacter carbinolicus) protein is Chorismate synthase.